The following is a 697-amino-acid chain: Serine/threonine-protein kinase tousled-like 2 (697 aa).

2 disordered regions span residues 25-159 (VAKG…SQSE) and 288-316 (KLLI…SKSN). Over residues 31-44 (HNESSNQSLCSVGS) the composition is skewed to polar residues. The span at 46 to 61 (SDKELETPEKKSNDQR) shows a compositional bias: basic and acidic residues. A compositionally biased stretch (polar residues) spans 109–145 (SSPQHSLSNPPAAVQQGSPSSISSVNTDHSHTSTSHK). Coiled-coil stretches lie at residues 265–294 (AFQN…IKKK) and 336–373 (KLRL…IHNE). Positions 388–666 (YLLLHLLGRG…VHQLASDPYL (279 aa)) constitute a Protein kinase domain. ATP-binding positions include 394–402 (LGRGGFSEV) and Lys-417. Asp-518 functions as the Proton acceptor in the catalytic mechanism.

The protein belongs to the protein kinase superfamily. Ser/Thr protein kinase family. As to quaternary structure, monomer. May form homodimers; homodimerization may enhance autophosphoylation and enzymatic activity. Heterodimer with TLK1. Mg(2+) is required as a cofactor. Phosphorylated. Autophosphorylated; phosphorylation promotes the assembly of higher order oligomers and enzymatic activity.

The protein resides in the nucleus. It localises to the nucleoplasm. Its subcellular location is the cytoplasm. The protein localises to the perinuclear region. It is found in the cytoskeleton. It carries out the reaction L-seryl-[protein] + ATP = O-phospho-L-seryl-[protein] + ADP + H(+). It catalyses the reaction L-threonyl-[protein] + ATP = O-phospho-L-threonyl-[protein] + ADP + H(+). Functionally, serine/threonine-protein kinase involved in the process of chromatin assembly and probably also DNA replication, transcription, repair, and chromosome segregation. Negative regulator of amino acid starvation-induced autophagy. In Danio rerio (Zebrafish), this protein is Serine/threonine-protein kinase tousled-like 2.